A 72-amino-acid chain; its full sequence is DNA-directed RNA polymerase subunit Rpo10 (72 aa).

Zn(2+) is bound by residues Cys7, Cys10, Cys45, and Cys46.

The protein belongs to the archaeal Rpo10/eukaryotic RPB10 RNA polymerase subunit family. As to quaternary structure, part of the RNA polymerase complex. It depends on Zn(2+) as a cofactor.

It is found in the cytoplasm. It carries out the reaction RNA(n) + a ribonucleoside 5'-triphosphate = RNA(n+1) + diphosphate. Its function is as follows. DNA-dependent RNA polymerase (RNAP) catalyzes the transcription of DNA into RNA using the four ribonucleoside triphosphates as substrates. This chain is DNA-directed RNA polymerase subunit Rpo10, found in Methanopyrus kandleri (strain AV19 / DSM 6324 / JCM 9639 / NBRC 100938).